The primary structure comprises 108 residues: Trp operon repressor homolog (108 aa).

Residues 59–82 mediate DNA binding; that stretch reads QRQISQLLGVGVATITRGSNELKS.

Belongs to the TrpR family. Homodimer.

The protein localises to the cytoplasm. This protein is an aporepressor. When complexed with L-tryptophan it binds the operator region of the trp operon and prevents the initiation of transcription. The sequence is that of Trp operon repressor homolog from Aliivibrio fischeri (strain ATCC 700601 / ES114) (Vibrio fischeri).